The chain runs to 369 residues: uncharacterized protein (369 aa).

The signal sequence occupies residues 1–19 (MKKLIAVAVLSACGSLAHA).

This is an uncharacterized protein from Haemophilus influenzae (strain ATCC 51907 / DSM 11121 / KW20 / Rd).